We begin with the raw amino-acid sequence, 113 residues long: Prefoldin subunit beta (113 aa).

Belongs to the prefoldin subunit beta family. As to quaternary structure, heterohexamer of two alpha and four beta subunits.

The protein resides in the cytoplasm. Its function is as follows. Molecular chaperone capable of stabilizing a range of proteins. Seems to fulfill an ATP-independent, HSP70-like function in archaeal de novo protein folding. The sequence is that of Prefoldin subunit beta (pfdB) from Methanocaldococcus jannaschii (strain ATCC 43067 / DSM 2661 / JAL-1 / JCM 10045 / NBRC 100440) (Methanococcus jannaschii).